The sequence spans 359 residues: Heat-inducible transcription repressor HrcA (359 aa).

It belongs to the HrcA family.

Its function is as follows. Negative regulator of class I heat shock genes (grpE-dnaK-dnaJ and groELS operons). Prevents heat-shock induction of these operons. This is Heat-inducible transcription repressor HrcA from Sinorhizobium medicae (strain WSM419) (Ensifer medicae).